Reading from the N-terminus, the 360-residue chain is Phospho-N-acetylmuramoyl-pentapeptide-transferase (360 aa).

11 helical membrane-spanning segments follow: residues 2-22 (LVWV…FQYL), 26-46 (AILG…VMIR), 73-93 (TMGG…WADL), 97-117 (YVLI…VDDW), 134-154 (YFWQ…TAHL), 168-188 (ITLA…VGGS), 199-219 (GLAI…AYLS), 236-256 (TGEL…FLWF), 263-283 (VFMG…VAVI), 288-308 (LVFF…ILQV), and 339-359 (IVRF…TLKI).

The protein belongs to the glycosyltransferase 4 family. MraY subfamily. Mg(2+) serves as cofactor.

The protein localises to the cell inner membrane. It catalyses the reaction UDP-N-acetyl-alpha-D-muramoyl-L-alanyl-gamma-D-glutamyl-meso-2,6-diaminopimeloyl-D-alanyl-D-alanine + di-trans,octa-cis-undecaprenyl phosphate = di-trans,octa-cis-undecaprenyl diphospho-N-acetyl-alpha-D-muramoyl-L-alanyl-D-glutamyl-meso-2,6-diaminopimeloyl-D-alanyl-D-alanine + UMP. It participates in cell wall biogenesis; peptidoglycan biosynthesis. In terms of biological role, catalyzes the initial step of the lipid cycle reactions in the biosynthesis of the cell wall peptidoglycan: transfers peptidoglycan precursor phospho-MurNAc-pentapeptide from UDP-MurNAc-pentapeptide onto the lipid carrier undecaprenyl phosphate, yielding undecaprenyl-pyrophosphoryl-MurNAc-pentapeptide, known as lipid I. The sequence is that of Phospho-N-acetylmuramoyl-pentapeptide-transferase from Hahella chejuensis (strain KCTC 2396).